The following is a 439-amino-acid chain: MMSGEHTLKAVRGSFIDVTRTIDNPEEIASALRFIEDGLLLIKQGKVEWFGEWENGKHQIPDTIRVRDYRGKLIVPGFVDTHIHYPQSEMVGAYGEQLLEWLNKHTFPTERRYEDLEYAREMSAFFIKQLLRNGTTTALVFGTVHPQSVDALFEAASHINMRMIAGKVMMDRNAPDYLLDTAESSYHQSKELIERWHKNGRLLYAITPRFAPTSSPEQMAMAQRLKEEYPDTWVHTHLCENKDEIAWVKSLYPDHDGYLDVYHQYGLTGKNCVFAHCVHLEEKEWDRLSETKSSIAFCPTSNLYLGSGLFNLKKAWQKKVKVGMGTDIGAGTTFNMLQTLNEAYKVLQLQGYRLSAYEAFYLATLGGAKSLGLDDLIGNFLPGKEADFVVMEPTATPLQQLRYDNSVSLVDKLFVMMTLGDDRSIYRTYVDGRLVYERN.

Zn(2+)-binding residues include His82 and His84. Residues 84–87 (HYPQ), 209–210 (RF), 237–240 (HLCE), and Asp327 each bind substrate. Zn(2+)-binding residues include His237 and Asp327.

It belongs to the metallo-dependent hydrolases superfamily. ATZ/TRZ family. It depends on Zn(2+) as a cofactor.

The enzyme catalyses guanine + H2O + H(+) = xanthine + NH4(+). The protein operates within purine metabolism; guanine degradation; xanthine from guanine: step 1/1. Catalyzes the hydrolytic deamination of guanine, producing xanthine and ammonia. The sequence is that of Guanine deaminase (guaD) from Escherichia coli (strain K12).